Here is a 166-residue protein sequence, read N- to C-terminus: uncharacterized protein (166 aa).

3 Pentapeptide repeat domains span residues 38–77 (GECL…NLRR), 78–117 (ALLD…NLER), and 118–157 (SFLR…EFWE).

This is an uncharacterized protein from Synechocystis sp. (strain ATCC 27184 / PCC 6803 / Kazusa).